The following is a 426-amino-acid chain: D-cysteine desulfhydrase 1, mitochondrial (426 aa).

The transit peptide at 1–63 directs the protein to the mitochondrion; that stretch reads MARGAHQAPG…IGSFLSKRPY (63 aa). The residue at position 119 (Lys-119) is an N6-(pyridoxal phosphate)lysine. The active-site Nucleophile is the Ser-146.

This sequence belongs to the ACC deaminase/D-cysteine desulfhydrase family. As to quaternary structure, homodimer. Pyridoxal 5'-phosphate is required as a cofactor. In terms of tissue distribution, present in seeds (at protein level).

Its subcellular location is the mitochondrion. The catalysed reaction is D-cysteine + H2O = hydrogen sulfide + pyruvate + NH4(+) + H(+). With respect to regulation, inhibited by L-cysteine (L-cys). Its function is as follows. Catalyzes the production of hydrogen sulfide (H2S) from D-cysteine (D-cys). The sequence is that of D-cysteine desulfhydrase 1, mitochondrial from Oryza sativa subsp. japonica (Rice).